The primary structure comprises 450 residues: MDKKINLDYLIDDIIVNSDDLTPFQCQICFNSVIDFKKETLSFDVLQCRNGHISCHECWNRQLSIKQECPSCKVKTLPSELSRNIFLENAFRALKVICPNKFKESKFQGEAVHCENGCPEILKVELLEHHLKECQYQFIKCPNNSNKCKYIIRKNQIEHHNQSVCDYSLIQCEKCSELIERKKLNKHIESECDTLMITCSKCSASIGKKLMNHHLETDCPMEEISCLYKAGGCNKRFLRSQLSQHLSENNNHIFYIQNVMDLHKLQLDECNQDYRKLEKQNRDLEKRLFYLESTVNSTVINSKPHECGGGGGGGSGNNVYKGKWVINNWDRKLREYPISKSLNSPFFQIGSSKFFIMLYPNGNNEVKGFLSIFLYKIYDRPSLVKYSLEAKNIDPTKNYKNTHTNNFINNNGNGWFKWIENKSQNGFFSNNSLTISISIKIIQDHSLVTE.

Residues 26–73 (CQICFNSVIDFKKETLSFDVLQCRNGHISCHECWNRQLSIKQECPSCK) form an RING-type; degenerate zinc finger. 2 TRAF-type zinc fingers span residues 129–185 (HHLK…KKLN) and 186–243 (KHIE…SQLS). A coiled-coil region spans residues 257–297 (QNVMDLHKLQLDECNQDYRKLEKQNRDLEKRLFYLESTVNS). The 121-residue stretch at 319–439 (VYKGKWVINN…NNSLTISISI (121 aa)) folds into the MATH domain.

Belongs to the TNF receptor-associated factor family. A subfamily.

Its subcellular location is the cytoplasm. Functionally, probable adapter protein and signal transducer that links members of the tumor necrosis factor receptor family to different signaling pathways by association with the receptor cytoplasmic domain and kinases. This Dictyostelium discoideum (Social amoeba) protein is TNF receptor-associated factor family protein DDB_G0273433/DDB_G0273509.